A 304-amino-acid chain; its full sequence is HPr kinase/phosphorylase (304 aa).

Catalysis depends on residues H136 and K157. 151 to 158 is an ATP binding site; that stretch reads GESGIGKS. S158 serves as a coordination point for Mg(2+). Catalysis depends on D175, which acts as the Proton acceptor; for phosphorylation activity. Proton donor; for dephosphorylation activity. An important for the catalytic mechanism of both phosphorylation and dephosphorylation region spans residues 198-207; it reads LEVRGIGIID. Residue E199 coordinates Mg(2+). The active site involves R240. The important for the catalytic mechanism of dephosphorylation stretch occupies residues 261-266; it reads PVRPGR.

The protein belongs to the HPrK/P family. As to quaternary structure, homohexamer. The cofactor is Mg(2+).

It catalyses the reaction [HPr protein]-L-serine + ATP = [HPr protein]-O-phospho-L-serine + ADP + H(+). The catalysed reaction is [HPr protein]-O-phospho-L-serine + phosphate + H(+) = [HPr protein]-L-serine + diphosphate. Its function is as follows. Catalyzes the ATP- as well as the pyrophosphate-dependent phosphorylation of a specific serine residue in HPr, a phosphocarrier protein of the phosphoenolpyruvate-dependent sugar phosphotransferase system (PTS). HprK/P also catalyzes the pyrophosphate-producing, inorganic phosphate-dependent dephosphorylation (phosphorolysis) of seryl-phosphorylated HPr (P-Ser-HPr). The two antagonistic activities of HprK/P are regulated by several intracellular metabolites, which change their concentration in response to the absence or presence of rapidly metabolisable carbon sources (glucose, fructose, etc.) in the growth medium. Therefore, by controlling the phosphorylation state of HPr, HPrK/P is a sensor enzyme that plays a major role in the regulation of carbon metabolism and sugar transport: it mediates carbon catabolite repression (CCR), and regulates PTS-catalyzed carbohydrate uptake and inducer exclusion. This Clostridium botulinum (strain Alaska E43 / Type E3) protein is HPr kinase/phosphorylase.